An 85-amino-acid polypeptide reads, in one-letter code: Beta-insect depressant toxin Lqh-dprIT3g (85 aa).

The N-terminal stretch at 1 to 21 (MKLLLLLTISASMLIEGLVNA) is a signal peptide. Residues 22 to 82 (DGYIRGGDGC…EWDYETDTCG (61 aa)) enclose the LCN-type CS-alpha/beta domain. Disulfide bonds link C31/C81, C35/C56, C42/C63, and C46/C65. A Glycine amide modification is found at G82.

It belongs to the long (4 C-C) scorpion toxin superfamily. Sodium channel inhibitor family. Beta subfamily. Expressed by the venom gland.

Its subcellular location is the secreted. Depressant insect beta-toxins cause a transient contraction paralysis followed by a slow flaccid paralysis. They bind voltage-independently at site-4 of sodium channels (Nav) and block action potentials, primarily by depolarizing the axonal membrane and suppressing the sodium current. This depressant toxin is active only on insects. It is found in a relatively small amount in the venom. The chain is Beta-insect depressant toxin Lqh-dprIT3g from Leiurus hebraeus (Hebrew deathstalker scorpion).